The following is a 91-amino-acid chain: MSRTIFCTYLQRDAEGQDFQLYPGELGKRIYNEISKDAWAQWQHKQTMLINEKKLNMMNAEHRKLLEQEMVSFLFEGKDVHIEGYTPEDKK.

Belongs to the Fe(2+)-trafficking protein family. Monomer.

Its function is as follows. Could be a mediator in iron transactions between iron acquisition and iron-requiring processes, such as synthesis and/or repair of Fe-S clusters in biosynthetic enzymes. The sequence is that of Probable Fe(2+)-trafficking protein from Salmonella agona (strain SL483).